Consider the following 162-residue polypeptide: Beta-carotene hydroxylase (162 aa).

A Fatty acid hydroxylase domain is found at 8–135 (VATVLVMELT…GRDHCVSFGF (128 aa)).

This sequence belongs to the sterol desaturase family.

The enzyme catalyses all-trans-beta-carotene + 4 reduced [2Fe-2S]-[ferredoxin] + 2 O2 + 4 H(+) = all-trans-zeaxanthin + 4 oxidized [2Fe-2S]-[ferredoxin] + 2 H2O. Its pathway is carotenoid biosynthesis; astaxanthin biosynthesis. In terms of biological role, catalyzes the hydroxylation reaction from beta-carotene to zeaxanthin via beta-cryptoxanthin. This chain is Beta-carotene hydroxylase (crtZ), found in Paracoccus sp. (strain N81106 / MBIC 01143) (Agrobacterium aurantiacum).